A 258-amino-acid polypeptide reads, in one-letter code: Undecaprenyl-diphosphatase (258 aa).

8 helical membrane-spanning segments follow: residues 1 to 21 (MSIIDAVILGIVEGLTEFLPV), 42 to 62 (LKCFEVVIQLGSILAVVFTFF), 71 to 91 (LWIKLIIGFLPTAAIGYLLYS), 96 to 116 (LFSQNVVVYMLIIWGVIFIVV), 134 to 154 (GISYKQAFFIGLSQCFAMVPG), 173 to 193 (QTAAAFSFLLAVPTMFAATFY), 211 to 231 (LFLLGGFVAFLVALFAIKMFL), and 237 to 257 (FDYIPFGIYRILIAFAFMFFV).

It belongs to the UppP family.

The protein localises to the cell inner membrane. The enzyme catalyses di-trans,octa-cis-undecaprenyl diphosphate + H2O = di-trans,octa-cis-undecaprenyl phosphate + phosphate + H(+). Functionally, catalyzes the dephosphorylation of undecaprenyl diphosphate (UPP). Confers resistance to bacitracin. The chain is Undecaprenyl-diphosphatase from Campylobacter hominis (strain ATCC BAA-381 / DSM 21671 / CCUG 45161 / LMG 19568 / NCTC 13146 / CH001A).